The following is a 199-amino-acid chain: Transgelin-2 (199 aa).

A2 carries the post-translational modification N-acetylalanine. S11 carries the post-translational modification Phosphoserine. K17 and K20 each carry N6-acetyllysine. Residues 24–136 enclose the Calponin-homology (CH) domain; that stretch reads ADLEQILIQW…RTLMNLGGLA (113 aa). A Phosphoserine modification is found at S163. K171 participates in a covalent cross-link: Glycyl lysine isopeptide (Lys-Gly) (interchain with G-Cter in SUMO2). A Calponin-like repeat occupies 174-199; sequence IGLQMGTNRGASQAGMTGYGMPRQIL. A Phosphothreonine modification is found at T180. Residues R182 and R196 each carry the omega-N-methylarginine modification.

Belongs to the calponin family. As to expression, expressed in epididymis (at protein level).

This is Transgelin-2 (TAGLN2) from Homo sapiens (Human).